Here is a 619-residue protein sequence, read N- to C-terminus: Teichoic acid poly(ribitol-phosphate) polymerase (619 aa).

The protein belongs to the CDP-glycerol glycerophosphotransferase family.

The protein resides in the cell membrane. The catalysed reaction is 4-O-[1-D-ribitylphospho-(2R)-1-glycerylphospho]-N-acetyl-beta-D-mannosaminyl-(1-&gt;4)-N-acetyl-alpha-D-glucosaminyl di-trans,octa-cis-undecaprenyl diphosphate + n CDP-L-ribitol = 4-O-[(D-ribitylphospho)(n)-D-ribitylphospho-(2R)-glycerylphospho]-N-acetyl-beta-D-mannosaminyl-(1-&gt;4)-N-acetyl-alpha-D-glucosaminyl di-trans,octa-cis-undecaprenyl diphosphate + n CMP + n H(+). The protein operates within cell wall biogenesis; poly(ribitol phosphate) teichoic acid biosynthesis. Its function is as follows. Responsible for the polymerization of the main chain of the major teichoic acid by sequential transfer of ribitol phosphate units from CDP-ribitol to the glycerol phosphate attached to the disaccharide linkage unit. Synthesizes polymers of up to 40 ribitol phosphate units in length. In Bacillus spizizenii (strain ATCC 23059 / NRRL B-14472 / W23) (Bacillus subtilis subsp. spizizenii), this protein is Teichoic acid poly(ribitol-phosphate) polymerase (tarL).